The chain runs to 223 residues: Ion-translocating oxidoreductase complex subunit E (223 aa).

Transmembrane regions (helical) follow at residues 17–37 (NGVLCMLLGMCPTMAMTGTAT), 40–60 (LGMGLATAAVMAASNLMVAMF), 70–90 (IPVYILIVAANVTFVDLGMNA), 94–114 (ELYKVLGLFIPLIVSNCLPLA), 129–149 (FLDGLFMGLGFTLALTAIGAV), and 182–202 (WGILVLILPPGGFLIAGLMVV).

The protein belongs to the NqrDE/RnfAE family. In terms of assembly, the complex is composed of six subunits: RnfA, RnfB, RnfC, RnfD, RnfE and RnfG.

The protein resides in the cell inner membrane. In terms of biological role, part of a membrane-bound complex that couples electron transfer with translocation of ions across the membrane. This chain is Ion-translocating oxidoreductase complex subunit E, found in Paramagnetospirillum magneticum (strain ATCC 700264 / AMB-1) (Magnetospirillum magneticum).